The primary structure comprises 680 residues: Penicillin-binding protein 2B (680 aa).

Over Met1–Ser8 the chain is Cytoplasmic. The helical transmembrane segment at Ile9–Gly29 threads the bilayer. The Extracellular segment spans residues Arg30–Asn680. Ser386 (acyl-ester intermediate) is an active-site residue.

It belongs to the transpeptidase family. As to quaternary structure, interacts with MreC in the elongasome.

It is found in the cell membrane. Functionally, a transpeptidase that forms peptide cross-links between adjacent glycan strands in cell wall peptidoglycan (PG). Part of the elongasome machinery that synthesizes peripheral PG. This chain is Penicillin-binding protein 2B, found in Streptococcus pneumoniae serotype 2 (strain D39 / NCTC 7466).